The following is a 65-amino-acid chain: Large ribosomal subunit protein bL35 (65 aa).

Residues 1–26 (MPKIKTVRGAAKRFKKTASGGFKRKQ) are disordered. Residues 10 to 26 (AAKRFKKTASGGFKRKQ) are compositionally biased toward basic residues.

It belongs to the bacterial ribosomal protein bL35 family.

This chain is Large ribosomal subunit protein bL35, found in Actinobacillus succinogenes (strain ATCC 55618 / DSM 22257 / CCUG 43843 / 130Z).